A 60-amino-acid chain; its full sequence is Cecropin-B1 (60 aa).

A signal peptide spans 1–24 (MNFSKVFALVLLIGLVLLTGHTEA).

The protein belongs to the cecropin family.

The protein localises to the secreted. Putative antimicrobial peptide. Partially neutralizes lipopolysaccharides (LPS). Exhibits anti-inflammatory properties: inhibits LPS-induced iNOS/NOS2 transcription, nitric oxide (NO) and pro-inflammatory cytokine production in mouse macrophages and human peripheral blood mononuclear cells (PBMCs); inhibits LPS-induced activation of MAPK and NF-kappa-B signaling pathways in mouse macrophages. The polypeptide is Cecropin-B1 (Aedes aegypti (Yellowfever mosquito)).